The following is a 1289-amino-acid chain: Trafficking protein particle complex II-specific subunit 120 (1289 aa).

Positions 354–365 are enriched in polar residues; sequence STGISPVDSNSK. Residues 354 to 374 are disordered; sequence STGISPVDSNSKATASTTASS. Phosphoserine is present on residues S379 and S387.

The protein belongs to the TRS120 family. As to quaternary structure, part of the multisubunit TRAPP (transport protein particle) II complex composed of BET3, BET5, TRS20, TRS23, TRS31, TRS33, TRS65, TRS120 and TRS130. Interacts directly with TRS65.

It is found in the golgi apparatus. The protein resides in the cis-Golgi network. Its function is as follows. Specific subunit of the TRAPP II complex, a highly conserved vesicle tethering complex that functions in the late Golgi as a guanine nucleotide exchanger (GEF) for the Golgi YPT1 GTPase. TRS120 plays a role in the YPT GEF activity of TRAPP II in concert with the two other TRAPP II-specific subunits TRS65 and TRS130. In Saccharomyces cerevisiae (strain ATCC 204508 / S288c) (Baker's yeast), this protein is Trafficking protein particle complex II-specific subunit 120 (TRS120).